We begin with the raw amino-acid sequence, 462 residues long: L-seryl-tRNA(Sec) selenium transferase (462 aa).

Residue K293 is modified to N6-(pyridoxal phosphate)lysine.

The protein belongs to the SelA family. The cofactor is pyridoxal 5'-phosphate.

The protein resides in the cytoplasm. The enzyme catalyses L-seryl-tRNA(Sec) + selenophosphate + H(+) = L-selenocysteinyl-tRNA(Sec) + phosphate. Its pathway is aminoacyl-tRNA biosynthesis; selenocysteinyl-tRNA(Sec) biosynthesis; selenocysteinyl-tRNA(Sec) from L-seryl-tRNA(Sec) (bacterial route): step 1/1. In terms of biological role, converts seryl-tRNA(Sec) to selenocysteinyl-tRNA(Sec) required for selenoprotein biosynthesis. This Clostridium botulinum (strain 657 / Type Ba4) protein is L-seryl-tRNA(Sec) selenium transferase.